The chain runs to 333 residues: HTH-type transcriptional repressor PurR (333 aa).

An HTH lacI-type domain is found at 2–56; the sequence is ATIKDVAKMAGVSTTTVSHVINKTRFVAKETEQQVLQAIKNLNYSPSAVARSLKV. Positions 4–23 form a DNA-binding region, H-T-H motif; the sequence is IKDVAKMAGVSTTTVSHVIN. Residues 48–56 mediate DNA binding; sequence SAVARSLKV. Hypoxanthine-binding residues include Tyr73, Lys189, Thr191, Phe220, and Asp274.

As to quaternary structure, homodimer.

The protein operates within purine metabolism; purine nucleotide biosynthesis [regulation]. Its function is as follows. Is the main repressor of the genes involved in the de novo synthesis of purine nucleotides, regulating purB, purC, purEK, purF, purHD, purL, purMN and guaBA expression. PurR is allosterically activated to bind its cognate DNA by binding the purine corepressors, hypoxanthine or guanine, thereby effecting transcription repression. This chain is HTH-type transcriptional repressor PurR, found in Histophilus somni (strain 129Pt) (Haemophilus somnus).